A 223-amino-acid polypeptide reads, in one-letter code: UPF0441 protein YgiB (223 aa).

Residues 178–195 (TVPKTAMAPKPATTTTVT) show a composition bias toward low complexity. The segment at 178–223 (TVPKTAMAPKPATTTTVTRGGFGESVAKQSTMQRSAAGTSTRSMGG) is disordered. Over residues 204-223 (AKQSTMQRSAAGTSTRSMGG) the composition is skewed to polar residues.

The protein belongs to the UPF0441 family.

This chain is UPF0441 protein YgiB, found in Salmonella paratyphi A (strain ATCC 9150 / SARB42).